Here is a 374-residue protein sequence, read N- to C-terminus: Heat stress transcription factor A-8 (374 aa).

A DNA-binding region spans residues 17-112; that stretch reads VAPFLRKCYD…LLKNVIRRKN (96 aa). The segment at 126–192 is hydrophobic repeat HR-A/B; it reads TTYAQEKSGL…EMLSFLVMVM (67 aa). The AHA1 motif lies at 285-294; the sequence is DGAWEKLLLL. Residues 298–303 carry the Nuclear localization signal motif; it reads RKKTKK. The AHA2 signature appears at 330-339; that stretch reads KSYMLKLISE. A Nuclear export signal motif is present at residues 363 to 370; sequence LTEQMELL.

The protein belongs to the HSF family. Class A subfamily. As to quaternary structure, homotrimer. Post-translationally, exhibits temperature-dependent phosphorylation.

Its subcellular location is the cytoplasm. The protein localises to the nucleus. Its function is as follows. Transcriptional activator that specifically binds DNA sequence 5'-AGAAnnTTCT-3' known as heat shock promoter elements (HSE). The chain is Heat stress transcription factor A-8 (HSFA8) from Arabidopsis thaliana (Mouse-ear cress).